The primary structure comprises 366 residues: DNA integrity scanning protein DisA (366 aa).

The DAC domain occupies 21 to 159 (VHTLKGTLQR…EGKSHMLEQP (139 aa)). ATP contacts are provided by residues glycine 88, leucine 106, and 119–123 (TRHRS).

The protein belongs to the DisA family. Homooctamer. Mg(2+) serves as cofactor.

It carries out the reaction 2 ATP = 3',3'-c-di-AMP + 2 diphosphate. Participates in a DNA-damage check-point. DisA forms globular foci that rapidly scan along the chromosomes searching for lesions. Its function is as follows. Also has diadenylate cyclase activity, catalyzing the condensation of 2 ATP molecules into cyclic di-AMP (c-di-AMP). c-di-AMP likely acts as a signaling molecule that may couple DNA integrity with a cellular process. This Corynebacterium glutamicum (strain ATCC 13032 / DSM 20300 / JCM 1318 / BCRC 11384 / CCUG 27702 / LMG 3730 / NBRC 12168 / NCIMB 10025 / NRRL B-2784 / 534) protein is DNA integrity scanning protein DisA.